The sequence spans 173 residues: NADH-ubiquinone oxidoreductase chain 6 (173 aa).

6 helical membrane passes run 1–21, 27–47, 48–68, 87–107, 113–133, and 139–159; these read MTYF…AVAS, YGVV…LSLG, VSFV…VVFV, VVGY…VGGF, FGVI…FGGV, and CGVG…FVVL.

It belongs to the complex I subunit 6 family.

It localises to the mitochondrion membrane. It carries out the reaction a ubiquinone + NADH + 5 H(+)(in) = a ubiquinol + NAD(+) + 4 H(+)(out). Core subunit of the mitochondrial membrane respiratory chain NADH dehydrogenase (Complex I) that is believed to belong to the minimal assembly required for catalysis. Complex I functions in the transfer of electrons from NADH to the respiratory chain. The immediate electron acceptor for the enzyme is believed to be ubiquinone. This chain is NADH-ubiquinone oxidoreductase chain 6 (MT-ND6), found in Alle alle (Dovekie).